The primary structure comprises 302 residues: uncharacterized protein (302 aa).

The 60-residue stretch at 1 to 60 (MRMNMSDFATFFAVARNQSFRAAGDELGLSSSAISHSIKTLEQRLKIRLFNRTTRSVSLT) folds into the HTH lysR-type domain. The segment at residues 20 to 40 (FRAAGDELGLSSSAISHSIKT) is a DNA-binding region (H-T-H motif).

Belongs to the LysR transcriptional regulatory family.

This is an uncharacterized protein from Escherichia coli (strain K12).